The primary structure comprises 612 residues: Zinc metalloproteinase-disintegrin-like 2a (612 aa).

An N-terminal signal peptide occupies residues methionine 1–serine 20. Residues isoleucine 21–proline 189 constitute a propeptide that is removed on maturation. Residues lysine 199–proline 395 enclose the Peptidase M12B domain. Position 202 (glutamate 202) interacts with Ca(2+). N-linked (GlcNAc...) asparagine glycosylation occurs at asparagine 218. Aspartate 286 contributes to the Ca(2+) binding site. Intrachain disulfides connect cysteine 310-cysteine 390, cysteine 350-cysteine 374, and cysteine 352-cysteine 357. Zn(2+) is bound at residue histidine 335. The active site involves glutamate 336. Residues histidine 339 and histidine 345 each contribute to the Zn(2+) site. Residues cysteine 390, asparagine 393, valine 405, asparagine 408, phenylalanine 410, glutamate 412, glutamate 415, and aspartate 418 each coordinate Ca(2+). Positions proline 403–asparagine 489 constitute a Disintegrin domain. 14 disulfide bridges follow: cysteine 406–cysteine 435, cysteine 417–cysteine 430, cysteine 419–cysteine 425, cysteine 429–cysteine 452, cysteine 443–cysteine 449, cysteine 448–cysteine 474, cysteine 461–cysteine 481, cysteine 468–cysteine 500, cysteine 493–cysteine 505, cysteine 512–cysteine 562, cysteine 527–cysteine 573, cysteine 540–cysteine 550, cysteine 557–cysteine 599, and cysteine 593–cysteine 605. Positions glutamate 467–aspartate 469 match the D/ECD-tripeptide motif.

Belongs to the venom metalloproteinase (M12B) family. P-III subfamily. Zn(2+) serves as cofactor. As to expression, expressed by the venom gland.

The protein resides in the secreted. In terms of biological role, snake venom metalloproteinase that impairs hemostasis in the envenomed animal. The chain is Zinc metalloproteinase-disintegrin-like 2a from Crotalus adamanteus (Eastern diamondback rattlesnake).